The following is a 167-amino-acid chain: UPF0303 protein mlr5144 (167 aa).

Belongs to the UPF0303 family.

The sequence is that of UPF0303 protein mlr5144 from Mesorhizobium japonicum (strain LMG 29417 / CECT 9101 / MAFF 303099) (Mesorhizobium loti (strain MAFF 303099)).